The primary structure comprises 423 residues: Glutamate--cysteine ligase EgtA (423 aa).

This sequence belongs to the glutamate--cysteine ligase type 2 family. EgtA subfamily.

The catalysed reaction is L-cysteine + L-glutamate + ATP = gamma-L-glutamyl-L-cysteine + ADP + phosphate + H(+). It participates in amino-acid biosynthesis; ergothioneine biosynthesis. Catalyzes the synthesis of gamma-glutamylcysteine (gamma-GC). This compound is used as substrate for the biosynthesis of the low-molecular thiol compound ergothioneine. The polypeptide is Glutamate--cysteine ligase EgtA (Mycolicibacterium smegmatis (strain ATCC 700084 / mc(2)155) (Mycobacterium smegmatis)).